The sequence spans 344 residues: Arginine N-succinyltransferase (344 aa).

Leucine 125 lines the succinyl-CoA pocket. Histidine 229 (proton donor) is an active-site residue.

It belongs to the arginine N-succinyltransferase family.

The catalysed reaction is succinyl-CoA + L-arginine = N(2)-succinyl-L-arginine + CoA + H(+). It functions in the pathway amino-acid degradation; L-arginine degradation via AST pathway; L-glutamate and succinate from L-arginine: step 1/5. Its function is as follows. Catalyzes the transfer of succinyl-CoA to arginine to produce N(2)-succinylarginine. This is Arginine N-succinyltransferase from Escherichia coli O6:H1 (strain CFT073 / ATCC 700928 / UPEC).